A 287-amino-acid polypeptide reads, in one-letter code: Beta-lactamase GES-1 (287 aa).

The signal sequence occupies residues 1-18 (MRFIHALLLAGIAHSAYA). Cysteines 63 and 233 form a disulfide. S64 (nucleophile; acyl-ester intermediate) is an active-site residue. Residues K67, S125, E161, and T232 each contribute to the a beta-lactam site.

This sequence belongs to the class-A beta-lactamase family. Monomer. May form dimers.

It catalyses the reaction a beta-lactam + H2O = a substituted beta-amino acid. Its activity is regulated as follows. Inhibited by the beta-lactamase-blocking agents clavulanic acid, tazobactam, sulbactam and tazobactam and the carbapenem, imipenem. Inhibition by imipenem may involve Gly-165. In terms of biological role, extended-spectrum beta-lactamase (ESBL) which confers resistance to penicillins, as well as first, second, third and fourth-generation cephalosporins. Has ceftazidime-hydrolyzing activity. Inactive against the carbapenems, imipenem, meropenem, ertapenem and doripenem. However, weak hydrolytic activity with respect to imipenem has also been reported. The chain is Beta-lactamase GES-1 from Klebsiella pneumoniae.